The chain runs to 335 residues: Fructose-1,6-bisphosphatase class 1 (335 aa).

Mg(2+) is bound by residues Glu-94, Asp-113, Leu-115, and Asp-116. Substrate contacts are provided by residues 116-119, Asn-208, and Lys-274; that span reads DGSS. Glu-280 lines the Mg(2+) pocket.

The protein belongs to the FBPase class 1 family. Homotetramer. Mg(2+) is required as a cofactor.

It localises to the cytoplasm. The enzyme catalyses beta-D-fructose 1,6-bisphosphate + H2O = beta-D-fructose 6-phosphate + phosphate. It functions in the pathway carbohydrate biosynthesis; gluconeogenesis. The polypeptide is Fructose-1,6-bisphosphatase class 1 (Polynucleobacter asymbioticus (strain DSM 18221 / CIP 109841 / QLW-P1DMWA-1) (Polynucleobacter necessarius subsp. asymbioticus)).